The sequence spans 109 residues: Class I hydrophobin 18 (109 aa).

An N-terminal signal peptide occupies residues 1-20 (MFTEQVLNVIILLQTATVTA). Cystine bridges form between Cys28-Cys88, Cys35-Cys82, Cys36-Cys69, and Cys89-Cys102. N-linked (GlcNAc...) asparagine glycosylation is found at Asn91 and Asn106.

The protein belongs to the fungal hydrophobin family. As to quaternary structure, self-assembles to form functional amyloid fibrils called rodlets. Self-assembly into fibrillar rodlets occurs spontaneously at hydrophobic:hydrophilic interfaces and the rodlets further associate laterally to form amphipathic monolayers.

Its subcellular location is the secreted. The protein resides in the cell wall. Aerial growth, conidiation, and dispersal of filamentous fungi in the environment rely upon a capability of their secreting small amphipathic proteins called hydrophobins (HPBs) with low sequence identity. Class I can self-assemble into an outermost layer of rodlet bundles on aerial cell surfaces, conferring cellular hydrophobicity that supports fungal growth, development and dispersal; whereas Class II form highly ordered films at water-air interfaces through intermolecular interactions but contribute nothing to the rodlet structure. This chain is Class I hydrophobin 18, found in Pleurotus ostreatus (strain PC15) (Oyster mushroom).